A 949-amino-acid polypeptide reads, in one-letter code: Coiled-coil domain-containing protein 80 (949 aa).

A signal peptide spans 1–27; the sequence is MTWKMGPHFTMLLAMWLVCGSASQSSA. 3 disordered regions span residues 24–79, 289–360, and 408–609; these read QSSA…RRKS, HVVQ…ATRA, and GPSV…SPRK. Positions 295–305 are enriched in gly residues; it reads NNGGGGGGSTG. The span at 308-328 shows a compositional bias: basic and acidic residues; it reads SDKRKEDPRRTQIHPTREPPR. Residues 345–360 are compositionally biased toward low complexity; the sequence is RATTLPPAPVTTATRA. The segment covering 419–429 has biased composition (basic and acidic residues); the sequence is PRKEQQREKPQ. Polar residues predominate over residues 436–453; it reads KATNYGSFTATPPTTLWE. Residues 463–477 are compositionally biased toward basic and acidic residues; it reads RFRDNRTDKREHGHQ. N-linked (GlcNAc...) asparagine glycosylation is present at Asn-467. Basic residues predominate over residues 487–498; it reads KPIKGKLPKKKE. Composition is skewed to basic and acidic residues over residues 499–511, 534–548, and 556–581; these read KILSNEYEAKYDL, KESKKHEKPEKPEKE, and AKPDKLLRSEKQMKKAEKKSKQEKEK. Residues Lys-544 and Lys-547 each participate in a glycyl lysine isopeptide (Lys-Gly) (interchain with G-Cter in SUMO2) cross-link. A coiled-coil region spans residues 559-587; it reads DKLLRSEKQMKKAEKKSKQEKEKTKKKKA.

The protein belongs to the CCDC80 family. In terms of assembly, binds to various extracellular matrix proteins. Post-translationally, phosphorylated. In terms of tissue distribution, isoform 2 is expressed in uterus, liver, lung, spleen, kidney, heart, bladder, skeletal muscle and brain (at protein level). Isoform 2 is expressed very low in mammary gland and intestine (at protein level). Isoform 2 is expressed in lactating mammary glands and mammary tumors (at protein level). Ubiquitous (isoform 1). Isoform 2 is expressed in ovary, uterus, mammary glands, liver, lung, spleen, kidney, heart, bladder, intestine, skeletal muscle and brain.

Its subcellular location is the secreted. It is found in the extracellular space. It localises to the extracellular matrix. Promotes cell adhesion and matrix assembly. This Rattus norvegicus (Rat) protein is Coiled-coil domain-containing protein 80 (Ccdc80).